The chain runs to 101 residues: NADH-quinone oxidoreductase subunit K (101 aa).

The next 3 helical transmembrane spans lie at leucine 4–leucine 24, isoleucine 30–phenylalanine 50, and valine 61–leucine 81.

Belongs to the complex I subunit 4L family. NDH-1 is composed of 14 different subunits. Subunits NuoA, H, J, K, L, M, N constitute the membrane sector of the complex.

It localises to the cell inner membrane. The catalysed reaction is a quinone + NADH + 5 H(+)(in) = a quinol + NAD(+) + 4 H(+)(out). In terms of biological role, NDH-1 shuttles electrons from NADH, via FMN and iron-sulfur (Fe-S) centers, to quinones in the respiratory chain. The immediate electron acceptor for the enzyme in this species is believed to be ubiquinone. Couples the redox reaction to proton translocation (for every two electrons transferred, four hydrogen ions are translocated across the cytoplasmic membrane), and thus conserves the redox energy in a proton gradient. The sequence is that of NADH-quinone oxidoreductase subunit K from Cupriavidus pinatubonensis (strain JMP 134 / LMG 1197) (Cupriavidus necator (strain JMP 134)).